The chain runs to 388 residues: Na(+)/H(+) antiporter NhaA (388 aa).

Residues Met-1–Asp-11 lie on the Cytoplasmic side of the membrane. A helical membrane pass occupies residues Ala-12 to Ser-31. Topologically, residues Gly-32 to Asn-58 are periplasmic. A helical transmembrane segment spans residues Met-59–Lys-80. At Arg-81–Phe-96 the chain is on the cytoplasmic side. The chain crosses the membrane as a helical span at residues Pro-97–Asn-116. The Periplasmic portion of the chain corresponds to Tyr-117–Thr-122. The helical transmembrane segment at Arg-123 to Ala-130 threads the bilayer. The Cytoplasmic portion of the chain corresponds to Ala-131–Ile-154. Residues Phe-155–Thr-176 traverse the membrane as a helical segment. The Periplasmic portion of the chain corresponds to Asn-177–Ser-180. Residues Met-181 to Cys-200 form a helical membrane-spanning segment. The Cytoplasmic portion of the chain corresponds to Gly-201 to Arg-204. The helical transmembrane segment at Thr-205–Ser-222 threads the bilayer. A topological domain (periplasmic) is located at residue Gly-223. Residues Val-224–Phe-236 traverse the membrane as a helical segment. The Cytoplasmic portion of the chain corresponds to Ile-237–His-253. Residues Val-254–Ala-272 form a helical membrane-spanning segment. Over Gly-273 to Ser-286 the chain is Periplasmic. A helical transmembrane segment spans residues Ile-287–Leu-310. Residues Ala-311–Phe-339 are Cytoplasmic-facing. Residues Thr-340–Phe-350 form a helical membrane-spanning segment. Topologically, residues Gly-351 to Leu-357 are periplasmic. Residues Ile-358–Leu-380 form a helical membrane-spanning segment. Topologically, residues Arg-381–Val-388 are cytoplasmic.

Belongs to the NhaA Na(+)/H(+) (TC 2.A.33) antiporter family.

The protein resides in the cell inner membrane. The catalysed reaction is Na(+)(in) + 2 H(+)(out) = Na(+)(out) + 2 H(+)(in). Na(+)/H(+) antiporter that extrudes sodium in exchange for external protons. This is Na(+)/H(+) antiporter NhaA from Shigella dysenteriae serotype 1 (strain Sd197).